Reading from the N-terminus, the 273-residue chain is Formamidopyrimidine-DNA glycosylase (273 aa).

Catalysis depends on Pro-2, which acts as the Schiff-base intermediate with DNA. The Proton donor role is filled by Glu-3. Lys-58 acts as the Proton donor; for beta-elimination activity in catalysis. His-91, Arg-110, and Arg-153 together coordinate DNA. The segment at 238–272 (KVYGKEGQPCPRCGEDFVKIKICGRGTTYCLHCQK) adopts an FPG-type zinc-finger fold. Arg-262 (proton donor; for delta-elimination activity) is an active-site residue.

It belongs to the FPG family. As to quaternary structure, monomer. The cofactor is Zn(2+).

It catalyses the reaction Hydrolysis of DNA containing ring-opened 7-methylguanine residues, releasing 2,6-diamino-4-hydroxy-5-(N-methyl)formamidopyrimidine.. The enzyme catalyses 2'-deoxyribonucleotide-(2'-deoxyribose 5'-phosphate)-2'-deoxyribonucleotide-DNA = a 3'-end 2'-deoxyribonucleotide-(2,3-dehydro-2,3-deoxyribose 5'-phosphate)-DNA + a 5'-end 5'-phospho-2'-deoxyribonucleoside-DNA + H(+). In terms of biological role, involved in base excision repair of DNA damaged by oxidation or by mutagenic agents. Acts as a DNA glycosylase that recognizes and removes damaged bases. Has a preference for oxidized purines, such as 7,8-dihydro-8-oxoguanine (8-oxoG). Has AP (apurinic/apyrimidinic) lyase activity and introduces nicks in the DNA strand. Cleaves the DNA backbone by beta-delta elimination to generate a single-strand break at the site of the removed base with both 3'- and 5'-phosphates. The protein is Formamidopyrimidine-DNA glycosylase of Lactobacillus delbrueckii subsp. bulgaricus (strain ATCC BAA-365 / Lb-18).